A 160-amino-acid polypeptide reads, in one-letter code: Interleukin-36 alpha (160 aa).

The propeptide occupies 1–7 (MNKEKEL). The residue at position 98 (Tyr98) is a 3'-nitrotyrosine.

The protein belongs to the IL-1 family. Interacts with TMED10; the interaction mediates the translocation from the cytoplasm into the ERGIC (endoplasmic reticulum-Golgi intermediate compartment) and thereby secretion. In terms of processing, N-terminal truncation leads to a dramatic enhancement of its activity (&gt;1000-fold). Highly expressed in embryonic tissue and in tissues containing epithelial cells. Elevated expression levels are detected in chronic kidney disease; expressed inepithelia from the distal convoluted tubules (DCTs) to the cortical collecting ducts (CCDs) in single nephrons (at protein level).

The protein localises to the cytoplasm. It is found in the secreted. Its function is as follows. Cytokine that binds to and signals through the IL1RL2/IL-36R receptor which in turn activates NF-kappa-B and MAPK signaling pathways in target cells linked to a pro-inflammatory response. Part of the IL-36 signaling system that is thought to be present in epithelial barriers and to take part in local inflammatory response; similar to the IL-1 system with which it shares the coreceptor IL1RAP. Seems to be involved in skin inflammatory response by acting on keratinocytes, dendritic cells and indirectly on T-cells to drive tissue infiltration, cell maturation and cell proliferation. Induces the production of pro-inflammatory cytokines, including IL-12, Il-1 beta, IL-6, TNF-alpha and IL-23 in bone marrow-derived dendritic cells (BMDCs). Involved in dendritic cell maturation by stimulating the surface expression of CD80, CD86 and MHC class II. Induces the production of IFN-gamma, IL-4 and IL-17 by cultured CD4(+) T-cells and splenocytes. May play a role in pro-inflammatory effects in the lung: induces the expression of CXCL1 and CXCL2 in the lung, and the expression of TNF-alpha, IL-36c, IL-1A, IL-1B, CXCL1 and CXCL2 in isolated splenic CD11c(+) alveolar macrophages. May be involved in T-cell maturation by stimulating the surface expression of CD40 and modestly CD80 and CD86 in splenic CD11c(+) cells. May be involved in CD4(+) T-cell proliferation. Induces NF-kappa B activation in macrophages. This is Interleukin-36 alpha from Mus musculus (Mouse).